A 273-amino-acid polypeptide reads, in one-letter code: tRNA pseudouridine synthase B (273 aa).

Asp38 acts as the Nucleophile in catalysis.

It belongs to the pseudouridine synthase TruB family. Type 1 subfamily.

It carries out the reaction uridine(55) in tRNA = pseudouridine(55) in tRNA. Responsible for synthesis of pseudouridine from uracil-55 in the psi GC loop of transfer RNAs. The sequence is that of tRNA pseudouridine synthase B from Campylobacter concisus (strain 13826).